The chain runs to 292 residues: MKKVRKAIIPAAGLGTRFLPATKAMPKEMLPIVDKPTIQYIIEEAVEAGIEDIIIVTGKSKRAIEDHFDYSPELERNLEEKGKTELLEKVKKASNLADIHYIRQKEPKGLGHAVWCARNFIGDEPFAVLLGDDIVQAETPGLRQLMDEYEKTLSSIIGVQQVPEEETHRYGIIDPLTSEGRRYQVKNFVEKPPKGTAPSNLAILGRYVFTPEIFMYLEEQQVGAGGEIQLTDAIQKLNEIQRVFAYDFEGKRYDVGEKLGFITTTLEFAMQDKELRDQLVPFMEGLLNKEEI.

Belongs to the UDPGP type 2 family. As to quaternary structure, interacts with FloT.

It localises to the cell membrane. The protein resides in the membrane raft. The catalysed reaction is alpha-D-glucose 1-phosphate + UTP + H(+) = UDP-alpha-D-glucose + diphosphate. Its pathway is glycolipid metabolism; diglucosyl-diacylglycerol biosynthesis. Functionally, catalyzes the formation of UDP-glucose from glucose-1-phosphate and UTP. This is an intermediate step in the biosynthesis of diglucosyl-diacylglycerol (Glc2-DAG), i.e. the predominant glycolipid found in B.subtilis membrane, which is also used as a membrane anchor for lipoteichoic acid (LTA). Has a role in the biosynthesis of all phosphate-containing envelope polymers, since UDP-glucose serves as a glucosyl donor not only for the biosynthesis of LTA but also for wall teichoic acids (WTAs). Is required for biofilm formation. This is likely due to another role of UDP-glucose, which might also act as a metabolic signal regulating biofilm formation or may be involved in some unknown biosynthetic pathway essential for biofilm formation, e.g. the synthesis of an exopolysaccharide. The chain is UTP--glucose-1-phosphate uridylyltransferase (gtaB) from Bacillus subtilis (strain 168).